Here is a 455-residue protein sequence, read N- to C-terminus: Squamosa promoter-binding-like protein 16 (455 aa).

The segment at 115–192 (CPSCAVDGCK…DGHNRRRRKP (78 aa)) adopts an SBP-type zinc-finger fold. Zn(2+) is bound by residues cysteine 118, cysteine 123, cysteine 140, histidine 143, cysteine 159, cysteine 162, histidine 166, and cysteine 178. Positions 175–191 (KRSCRKRLDGHNRRRRK) match the Bipartite nuclear localization signal motif. A disordered region spans residues 182 to 204 (LDGHNRRRRKPQPDPMNSASYLA).

In terms of tissue distribution, expressed in young panicles.

The protein localises to the nucleus. In terms of biological role, trans-acting factor that binds specifically to the consensus nucleotide sequence 5'-TNCGTACAA-3'. May be involved in panicle development. The protein is Squamosa promoter-binding-like protein 16 (SPL16) of Oryza sativa subsp. japonica (Rice).